The chain runs to 209 residues: Small ribosomal subunit protein uS4 (209 aa).

Residues 23–46 (SRNPLLKKPHPPGQHGMQRKKKSD) form a disordered region. Residues 93-156 (CRLDNMVYRM…RKLQSVQESL (64 aa)) form the S4 RNA-binding domain.

Belongs to the universal ribosomal protein uS4 family. Part of the 30S ribosomal subunit. Contacts protein S5. The interaction surface between S4 and S5 is involved in control of translational fidelity.

Its function is as follows. One of the primary rRNA binding proteins, it binds directly to 16S rRNA where it nucleates assembly of the body of the 30S subunit. With S5 and S12 plays an important role in translational accuracy. The sequence is that of Small ribosomal subunit protein uS4 from Chlamydia felis (strain Fe/C-56) (Chlamydophila felis).